The following is a 78-amino-acid chain: Small ribosomal subunit protein bS18 (78 aa).

It belongs to the bacterial ribosomal protein bS18 family. Part of the 30S ribosomal subunit. Forms a tight heterodimer with protein bS6.

Binds as a heterodimer with protein bS6 to the central domain of the 16S rRNA, where it helps stabilize the platform of the 30S subunit. The polypeptide is Small ribosomal subunit protein bS18 (Acidothermus cellulolyticus (strain ATCC 43068 / DSM 8971 / 11B)).